Here is a 425-residue protein sequence, read N- to C-terminus: Tol-Pal system protein TolB (425 aa).

The N-terminal stretch at 1–22 (MRNFLYCTGVLLLLWMSTSSQA) is a signal peptide.

Belongs to the TolB family. In terms of assembly, the Tol-Pal system is composed of five core proteins: the inner membrane proteins TolA, TolQ and TolR, the periplasmic protein TolB and the outer membrane protein Pal. They form a network linking the inner and outer membranes and the peptidoglycan layer.

It localises to the periplasm. In terms of biological role, part of the Tol-Pal system, which plays a role in outer membrane invagination during cell division and is important for maintaining outer membrane integrity. The polypeptide is Tol-Pal system protein TolB (Nitrosomonas europaea (strain ATCC 19718 / CIP 103999 / KCTC 2705 / NBRC 14298)).